A 140-amino-acid chain; its full sequence is Anti-sigma F factor (140 aa).

The protein belongs to the anti-sigma-factor family.

It catalyses the reaction L-seryl-[protein] + ATP = O-phospho-L-seryl-[protein] + ADP + H(+). The catalysed reaction is L-threonyl-[protein] + ATP = O-phospho-L-threonyl-[protein] + ADP + H(+). Functionally, binds to sigma F and blocks its ability to form an RNA polymerase holoenzyme (E-sigma F). Phosphorylates SpoIIAA on a serine residue. This phosphorylation may enable SpoIIAA to act as an anti-anti-sigma factor that counteracts SpoIIAB and thus releases sigma F from inhibition. This chain is Anti-sigma F factor, found in Clostridium perfringens (strain ATCC 13124 / DSM 756 / JCM 1290 / NCIMB 6125 / NCTC 8237 / Type A).